Consider the following 119-residue polypeptide: Beta-2-microglobulin (119 aa).

Positions 1–20 are cleaved as a signal peptide; the sequence is MARFVVVALLALLSLSGLEA. In terms of domain architecture, Ig-like C1-type spans 25–114; sequence PKIQVYSRHP…VTFPTPKTVK (90 aa). C45 and C100 are disulfide-bonded.

Belongs to the beta-2-microglobulin family. In terms of assembly, heterodimer of an alpha chain and a beta chain. Beta-2-microglobulin is the beta-chain of major histocompatibility complex class I molecules.

Its subcellular location is the secreted. Functionally, component of the class I major histocompatibility complex (MHC). Involved in the presentation of peptide antigens to the immune system. The sequence is that of Beta-2-microglobulin (B2M) from Alouatta seniculus (Red howler monkey).